Here is a 650-residue protein sequence, read N- to C-terminus: Solute carrier family 23 member 2 (650 aa).

The segment covering 1 to 20 has biased composition (polar residues); that stretch reads MMGIGKNTTSKSMEAGSSTE. A disordered region spans residues 1 to 21; it reads MMGIGKNTTSKSMEAGSSTEG. The Cytoplasmic segment spans residues 9–110; that stretch reads TSKSMEAGSS…LCIFLGLQHY (102 aa). Residue S70 is modified to Phosphoserine. A Phosphothreonine modification is found at T75. Residue S78 is modified to Phosphoserine. T79 is modified (phosphothreonine). S81 is modified (phosphoserine). Residues 111 to 131 traverse the membrane as a helical segment; the sequence is LTCFSGTIAVPFLLADAMCVG. Residues 132-139 lie on the Extracellular side of the membrane; it reads YDQWATSQ. A helical membrane pass occupies residues 140 to 160; sequence LIGTIFFCVGITTLLQTTFGC. A topological domain (cytoplasmic) is located at residue R161. Residues 162–182 traverse the membrane as a helical segment; the sequence is LPLFQASAFAFLAPARAILSL. Residues 183 to 218 lie on the Extracellular side of the membrane; sequence DKWKCNTTDVSVANGTAELLHTEHIWYPRIREIQGA. N-linked (GlcNAc...) asparagine glycans are attached at residues N188 and N196. A helical transmembrane segment spans residues 219 to 239; it reads IIMSSLIEVVIGLLGLPGALL. At 240-266 the chain is on the cytoplasmic side; that stretch reads KYIGPLTITPTVALIGLSGFQAAGERA. The helical transmembrane segment at 267 to 284 threads the bilayer; the sequence is GKHWGIAMLTIFLVLLFS. Residues 285-288 lie on the Extracellular side of the membrane; it reads QYAR. Residues 289–302 constitute an intramembrane region (helical); sequence NVKFPLPIYKSKKG. The Extracellular portion of the chain corresponds to 303 to 309; that stretch reads WTAYKLQ. A helical membrane pass occupies residues 310–330; sequence LFKMFPIILAILVSWLLCFIF. Over 331-371 the chain is Cytoplasmic; sequence TVTDVFPPDSTKYGFYARTDARQGVLLVAPWFKVPYPFQWG. A helical membrane pass occupies residues 372 to 392; it reads LPTVSAAGVIGMLSAVVASII. Residues 393 to 417 are Extracellular-facing; the sequence is ESIGDYYACARLSCAPPPPIHAINR. A helical transmembrane segment spans residues 418 to 438; sequence GIFVEGLSCVLDGIFGTGNGS. The Cytoplasmic segment spans residues 439 to 461; sequence TSSSPNIGVLGITKVGSRRVIQC. The chain crosses the membrane as a helical span at residues 462–482; it reads GAALMLALGMIGKFSALFASL. The Extracellular portion of the chain corresponds to 483-485; the sequence is PDP. Residues 486-506 traverse the membrane as a helical segment; that stretch reads VLGALFCTLFGMITAVGLSNL. Topologically, residues 507–516 are cytoplasmic; it reads QFIDLNSSRN. The chain crosses the membrane as a helical span at residues 517–537; that stretch reads LFVLGFSIFFGLVLPSYLRQN. Topologically, residues 538 to 547 are extracellular; that stretch reads PLVTGITGID. The chain crosses the membrane as a helical span at residues 548 to 568; it reads QVLNVLLTTAMFVGGCVAFIL. Topologically, residues 569–650 are cytoplasmic; it reads DNTIPGTPEE…SSDEDSQATG (82 aa). The residue at position 649 (T649) is a Phosphothreonine.

The protein belongs to the nucleobase:cation symporter-2 (NCS2) (TC 2.A.40) family. As to quaternary structure, interacts with CLSTN3. Post-translationally, phosphorylated. Ubiquitous.

It localises to the cell membrane. It catalyses the reaction L-ascorbate(out) + 2 Na(+)(out) = L-ascorbate(in) + 2 Na(+)(in). Functionally, sodium/ascorbate cotransporter. Mediates electrogenic uptake of vitamin C, with a stoichiometry of 2 Na(+) for each ascorbate. The chain is Solute carrier family 23 member 2 (SLC23A2) from Homo sapiens (Human).